The primary structure comprises 57 residues: Small ribosomal subunit protein bS21 (57 aa).

The protein belongs to the bacterial ribosomal protein bS21 family.

The sequence is that of Small ribosomal subunit protein bS21 from Bacillus cytotoxicus (strain DSM 22905 / CIP 110041 / 391-98 / NVH 391-98).